The chain runs to 475 residues: Ribulose bisphosphate carboxylase large chain (475 aa).

The propeptide occupies 1 to 2; the sequence is MS. N-acetylproline is present on Pro3. Residue Lys14 is modified to N6,N6,N6-trimethyllysine. Positions 123 and 173 each coordinate substrate. Lys175 (proton acceptor) is an active-site residue. Lys177 contributes to the substrate binding site. Mg(2+) contacts are provided by Lys201, Asp203, and Glu204. The residue at position 201 (Lys201) is an N6-carboxylysine. The active-site Proton acceptor is the His294. 3 residues coordinate substrate: Arg295, His327, and Ser379.

It belongs to the RuBisCO large chain family. Type I subfamily. As to quaternary structure, heterohexadecamer of 8 large chains and 8 small chains. Mg(2+) serves as cofactor.

The protein localises to the plastid. It is found in the chloroplast. It catalyses the reaction 2 (2R)-3-phosphoglycerate + 2 H(+) = D-ribulose 1,5-bisphosphate + CO2 + H2O. The enzyme catalyses D-ribulose 1,5-bisphosphate + O2 = 2-phosphoglycolate + (2R)-3-phosphoglycerate + 2 H(+). Its function is as follows. RuBisCO catalyzes two reactions: the carboxylation of D-ribulose 1,5-bisphosphate, the primary event in carbon dioxide fixation, as well as the oxidative fragmentation of the pentose substrate in the photorespiration process. Both reactions occur simultaneously and in competition at the same active site. The polypeptide is Ribulose bisphosphate carboxylase large chain (Bazzania trilobata (Greater whipwort)).